A 196-amino-acid polypeptide reads, in one-letter code: MLIRKAEVRRQTRETEIRVQLQVDGTGEYALDTGVPFLEHMLALTAKFSGFDLQIRARGDLDVDDHHTVEDVGICLGEALVKALGDKAGIGRFGHAIVPMDDALALVAVDLSGRGYLAFDVPMPSPQVGRFDTELVEEFLRALAYNGRFNLHVRLLAGANTHHIIEAVFKGLGVALGSAARINAQRGVPSTKGVIN.

Belongs to the imidazoleglycerol-phosphate dehydratase family.

It localises to the cytoplasm. The catalysed reaction is D-erythro-1-(imidazol-4-yl)glycerol 3-phosphate = 3-(imidazol-4-yl)-2-oxopropyl phosphate + H2O. It participates in amino-acid biosynthesis; L-histidine biosynthesis; L-histidine from 5-phospho-alpha-D-ribose 1-diphosphate: step 6/9. The chain is Imidazoleglycerol-phosphate dehydratase from Desulforudis audaxviator (strain MP104C).